The following is a 432-amino-acid chain: 3-phosphoshikimate 1-carboxyvinyltransferase (432 aa).

3-phosphoshikimate-binding residues include Lys-22, Ser-23, and Arg-27. Residue Lys-22 coordinates phosphoenolpyruvate. Positions 96 and 127 each coordinate phosphoenolpyruvate. Residues Ser-173, Ser-174, Gln-175, Ser-201, Asp-316, Asn-339, and Lys-343 each contribute to the 3-phosphoshikimate site. Residue Gln-175 participates in phosphoenolpyruvate binding. Asp-316 serves as the catalytic Proton acceptor. Residues Arg-347, Arg-391, and Lys-416 each coordinate phosphoenolpyruvate.

It belongs to the EPSP synthase family. In terms of assembly, monomer.

The protein localises to the cytoplasm. The catalysed reaction is 3-phosphoshikimate + phosphoenolpyruvate = 5-O-(1-carboxyvinyl)-3-phosphoshikimate + phosphate. It functions in the pathway metabolic intermediate biosynthesis; chorismate biosynthesis; chorismate from D-erythrose 4-phosphate and phosphoenolpyruvate: step 6/7. Catalyzes the transfer of the enolpyruvyl moiety of phosphoenolpyruvate (PEP) to the 5-hydroxyl of shikimate-3-phosphate (S3P) to produce enolpyruvyl shikimate-3-phosphate and inorganic phosphate. This Histophilus somni (Haemophilus somnus) protein is 3-phosphoshikimate 1-carboxyvinyltransferase.